The following is a 304-amino-acid chain: MLWAHRKKRKAATETTEDKPLESHRANDSWIKSHFSRLSEERLPTYRYVSNNGHSPESRHGEVNTTLHVDTLTTKHGERGAALHRDSFASKQKISGSSMTKEMQRESGKSPSMEDDTWAAVAACTKEIDAKGHRVANSMLQRSTTHRRKGHAESRNISPEELKALEEVEIKLKGNFLTHHETGVAGANQSHTVYSQSRHSNQSHHSYPSHQSNQSHPVYSSYQGHHPSHLSPQSYPSYSSHQSHPGHSNHQGHSGLSSHQTHLGHSNHQGHPGHSSHQSHQGQPGHPSHQSHNLPNRRNPIYGS.

The segment covering 1-10 (MLWAHRKKRK) has biased composition (basic residues). The interval 1-28 (MLWAHRKKRKAATETTEDKPLESHRAND) is disordered. Basic and acidic residues predominate over residues 16-27 (TEDKPLESHRAN). The residue at position 39 (Ser-39) is a Phosphoserine. A compositionally biased stretch (polar residues) spans 91–101 (KQKISGSSMTK). Disordered regions lie at residues 91-115 (KQKI…SMED), 138-160 (SMLQ…ISPE), and 190-304 (SHTV…IYGS). Residues 151 to 160 (HAESRNISPE) are compositionally biased toward basic and acidic residues. Ser-158 is modified (phosphoserine). Over residues 195-206 (SQSRHSNQSHHS) the composition is skewed to low complexity. Residues 208-223 (PSHQSNQSHPVYSSYQ) are compositionally biased toward polar residues. Positions 229-248 (HLSPQSYPSYSSHQSHPGHS) are enriched in low complexity. Residues 249-263 (NHQGHSGLSSHQTHL) are compositionally biased toward polar residues. Low complexity predominate over residues 264–292 (GHSNHQGHPGHSSHQSHQGQPGHPSHQSH).

This is an uncharacterized protein from Mus musculus (Mouse).